The following is a 333-amino-acid chain: UDP-glucose 4-epimerase (333 aa).

NAD(+) is bound by residues 11–12 (YI), 32–37 (DSLVTG), 52–53 (DL), 75–79 (FAAYS), Asn94, Thr119, Tyr143, Lys147, and Phe171. Substrate-binding residues include Thr119 and Tyr143. Tyr143 serves as the catalytic Proton acceptor. Substrate contacts are provided by residues Asn172, 191–192 (HL), 208–210 (MIF), Arg223, and 284–287 (RSGD).

This sequence belongs to the NAD(P)-dependent epimerase/dehydratase family. In terms of assembly, homodimer. The cofactor is NAD(+).

It carries out the reaction UDP-alpha-D-glucose = UDP-alpha-D-galactose. It functions in the pathway carbohydrate metabolism; galactose metabolism. In terms of biological role, involved in the metabolism of galactose. Catalyzes the conversion of UDP-galactose (UDP-Gal) to UDP-glucose (UDP-Glc) through a mechanism involving the transient reduction of NAD. The sequence is that of UDP-glucose 4-epimerase (galE) from Streptococcus mutans serotype c (strain ATCC 700610 / UA159).